Reading from the N-terminus, the 176-residue chain is MGLPGPIHDILLVFLGSGIVLGSLGVILLTNTIYSAFSLGFVLVCISLFYILSNSYFVAAAQLLIYVGAINVLIIFAVMFMKGSEYSNDFSIWTVGDGVTSLVCTSIFFSLITTILDTSWYGIIWTTRSNQIMEQDLLSNVQQIGIHLVTDFILPFELISIVLLVALIGAIAMARQ.

Helical transmembrane passes span 10–30 (ILLV…ILLT), 32–52 (TIYS…FYIL), 61–81 (AQLL…VMFM), 92–112 (IWTV…FSLI), and 152–172 (FILP…GAIA).

Belongs to the complex I subunit 6 family. In terms of assembly, NDH is composed of at least 16 different subunits, 5 of which are encoded in the nucleus.

It localises to the plastid. The protein resides in the chloroplast thylakoid membrane. The enzyme catalyses a plastoquinone + NADH + (n+1) H(+)(in) = a plastoquinol + NAD(+) + n H(+)(out). The catalysed reaction is a plastoquinone + NADPH + (n+1) H(+)(in) = a plastoquinol + NADP(+) + n H(+)(out). Functionally, NDH shuttles electrons from NAD(P)H:plastoquinone, via FMN and iron-sulfur (Fe-S) centers, to quinones in the photosynthetic chain and possibly in a chloroplast respiratory chain. The immediate electron acceptor for the enzyme in this species is believed to be plastoquinone. Couples the redox reaction to proton translocation, and thus conserves the redox energy in a proton gradient. This Piper cenocladum (Ant piper) protein is NAD(P)H-quinone oxidoreductase subunit 6, chloroplastic (ndhG).